The sequence spans 185 residues: NADH-quinone oxidoreductase subunit B (185 aa).

[4Fe-4S] cluster contacts are provided by C37, C38, C103, and C132.

It belongs to the complex I 20 kDa subunit family. NDH-1 is composed of 14 different subunits. Subunits NuoB, C, D, E, F, and G constitute the peripheral sector of the complex. The cofactor is [4Fe-4S] cluster.

The protein localises to the cell membrane. It catalyses the reaction a quinone + NADH + 5 H(+)(in) = a quinol + NAD(+) + 4 H(+)(out). Functionally, NDH-1 shuttles electrons from NADH, via FMN and iron-sulfur (Fe-S) centers, to quinones in the respiratory chain. The immediate electron acceptor for the enzyme in this species is believed to be a menaquinone. Couples the redox reaction to proton translocation (for every two electrons transferred, four hydrogen ions are translocated across the cytoplasmic membrane), and thus conserves the redox energy in a proton gradient. This is NADH-quinone oxidoreductase subunit B from Thermobifida fusca (strain YX).